The following is a 7354-amino-acid chain: Microtubule-actin cross-linking factor 1, isoforms 1/2/3/4 (7354 aa).

The tract at residues 1–47 (MSSSDEETLSERSCRSERSCRSERSYRSERSGSLSPCPPGDTLPWNL) is disordered. The interval 1–295 (MSSSDEETLS…VITYVSSIYD (295 aa)) is actin-binding. A Phosphoserine modification is found at serine 4. The segment covering 9–30 (LSERSCRSERSCRSERSYRSER) has biased composition (basic and acidic residues). Serine 35 carries the post-translational modification Phosphoserine. Threonine 42 is subject to Phosphothreonine. Phosphoserine is present on serine 57. Calponin-homology (CH) domains are found at residues 78–181 (RVQK…LHFQ) and 194–298 (MSAK…DAFP). The stretch at 148 to 171 (QRQVKLVNIRNDDITDGNPKLTLG) is one LRR 1 repeat. A Phosphoserine modification is found at serine 280. LRR repeat units lie at residues 377 to 399 (LYKLLEVWIEFGRIKLPQGYHPN) and 441 to 464 (LNCEEKLTLAKNTLQADAAHLESG). In terms of domain architecture, SH3 spans 868 to 925 (KSTLSVKAICDYRQIEITICKNDECVLEDNSQRTKWKVISPTGNEAMVPSVCFLIPPP). The stretch at 1050-1073 (ISELKNIRLLLEECEQRLLKQIQS) is one LRR 5 repeat. The residue at position 1122 (serine 1122) is a Phosphoserine. LRR repeat units lie at residues 1128 to 1154 (ATTLRSELNLMVEKMDHVYGLSTVYLN), 1187 to 1210 (PADLSALESHRTTLQHWLSDVKDK), and 1257 to 1282 (HRVIAQLETRQSEVESIQEVLRDYRA). Phosphoserine occurs at positions 1367 and 1376. Plectin repeat units lie at residues 1577-1619 (LVLL…QLLG), 1654-1696 (LKVL…ELQS), 1769-1809 (RLLE…CAIL), 1811-1848 (RQLQTGGIIDTVTGDRMTIDEAVTNNLVAAKIALVILE), and 1855-1885 (GLLLPESGEILPITDALEQGIVSTELAHKIL). Serine 2051, serine 2077, and serine 2081 each carry phosphoserine. Composition is skewed to basic and acidic residues over residues 2120–2131 (KEEQAETLREEN) and 2145–2155 (SEGKDLSTEKS). Residues 2120–2155 (KEEQAETLREENISGDPLLVECPEESEGKDLSTEKS) form a disordered region. 5 Plectin repeats span residues 2276–2316 (STLS…VKLM), 2352–2393 (NVLM…RILE), 2394–2425 (GQVITGGIVDLKRGKKLSVTLASNLGLVDTAD), 2487–2528 (LLTK…LRKV), and 2671–2715 (LKVL…ASHQ). Disordered stretches follow at residues 2806-2841 (AGIRGSNGEKAEKGRKISVEMEGQRQDEKASSDSKV), 2951-2978 (EMGGEQSVQMSREAAVLSEEESDQEVTI), and 3058-3099 (SQET…HISK). Residues 2812-2837 (NGEKAEKGRKISVEMEGQRQDEKASS) show a composition bias toward basic and acidic residues. The span at 2968–2978 (SEEESDQEVTI) shows a compositional bias: acidic residues. 2 positions are modified to phosphoserine: serine 3082 and serine 3085. LRR repeat units lie at residues 3225-3244 (VGQRGPRVLASLLPEKLPTR), 3606-3630 (SGKSSLLCAEPKVDLKDLQGDIQSH), and 3657-3681 (LTALREKLHQAKEQYEVLQERTRVA). Spectrin repeat units lie at residues 3845–3920 (ELQK…NFEE) and 3962–4070 (QYQQ…ALLQ). At serine 3889 the chain carries Phosphoserine. The LRR 12 repeat unit spans residues 3898-3920 (KGDLRFVTISGQKVLETENNFEE). 2 LRR repeats span residues 4087–4112 (LQSIREVEQNLERDQVASLSSGVIQE) and 4223–4249 (IQELTLAMEDQKENLDTLEHLVTTLGS). One copy of the Spectrin 3 repeat lies at 4428-4536 (RMEEVQKEAS…TVARQKQLEE (109 aa)). A phosphoserine mark is found at serine 4458 and serine 4483. 3 LRR repeats span residues 4473-4496 (KAFLAELEQNSPKIQKVKEALAGL), 4563-4583 (GVLGPLSIDPNMLKQQVQFML), and 4728-4751 (KKRLETVALPLQGLEDLAADRMNR). The stretch at 4759–4863 (TQQFQQMFDE…KTANRQSRLK (105 aa)) is one Spectrin 4 repeat. A Phosphoserine modification is found at serine 4921. LRR repeat units lie at residues 5010 to 5035 (NKNLEKLKAQQEVLQALEPQVDYLRN), 5131 to 5153 (NKIQALRFDIEDSEAECRKMLEE), and 5240 to 5263 (KDQVDPLQVKLQQVNGLGQGLIQS). Spectrin repeat units lie at residues 5195 to 5300 (EDFY…QLQE), 5307 to 5409 (KFQD…QLED), 5414 to 5506 (AKQF…ADIT), 5631 to 5735 (RSQQ…ARLE), 5742 to 5844 (NQFW…ALDE), 5961 to 6066 (LAEK…KLED), 6071 to 6175 (AVQY…HKLE), 6181 to 6284 (LGQF…QQLQ), 6289 to 6395 (QAQG…KLEE), 6400 to 6503 (ATEF…RSLD), 6508 to 6614 (RAKQ…KLEE), 6621 to 6722 (QFMD…RLEQ), and 6726 to 6830 (QAEE…QRLE). Threonine 5394 is modified (phosphothreonine). LRR repeat units lie at residues 5654–5678 (MALGPIRLEQDQTTAQLQVQKAFSI) and 5763–5787 (AQLPPPAVDHEQLRQQQEEMRQLRE). Residue serine 5988 is modified to Phosphoserine. Residue lysine 6166 is modified to N6-acetyllysine. One copy of the LRR 23 repeat lies at 6452–6475 (RDQIIELDQTGNQLKFLSQKQDVV). The interval 6904 to 6937 (SVEPTHAPFMEKSRSGSRKSLNQPTPPPMPILSQ) is disordered. Phosphoserine is present on serine 6923. EF-hand domains lie at 7001–7036 (HKKSRVMDFFRRIDKDQDGKITRQEFIDGILASKFP) and 7037–7072 (TTKLEMTAVADIFDRDGDGYIDYYEFVAALHPNKDA). Positions 7014, 7016, 7018, 7020, 7025, 7050, 7052, 7054, 7056, and 7061 each coordinate Ca(2+). The GAR domain maps to 7077-7155 (TDADKIEDEV…EFLVKNDPCR (79 aa)). The tract at residues 7077 to 7354 (TDADKIEDEV…ASPRTPGPKR (278 aa)) is C-terminal tail. Residues 7171–7354 (PEGASQGMTP…ASPRTPGPKR (184 aa)) are disordered. Positions 7191–7225 (SSRAASPTRSSSSASQSNHSCTSMPSSPATPASGT) are enriched in low complexity. A Phosphothreonine modification is found at threonine 7220. The segment covering 7242-7261 (FHSSRTSLAGDTSNSSSPAS) has biased composition (polar residues). Residues serine 7245 and serine 7258 each carry the phosphoserine modification. Positions 7276 to 7290 (SRPGSRAGSRAGSRA) are enriched in low complexity. The interval 7279-7294 (GSRAGSRAGSRASSRR) is 4 X 4 AA tandem repeats of [GS]-S-R-[AR]. Serine 7296 and serine 7299 each carry phosphoserine. The segment covering 7305–7315 (ETQSACSDTSE) has biased composition (polar residues). Low complexity predominate over residues 7316–7327 (SSAAGGQGSSRR).

It belongs to the plakin or cytolinker family. In terms of assembly, interacts with AXIN1, LRP6 and GOLGA4. Found in a complex composed of MACF1, APC, AXIN1, CTNNB1 and GSK3B. Interacts with MAPRE1, CLASP1 and CLASP2. Interacts with CAMSAP3. In terms of processing, phosphorylated on serine residues in the C-terminal tail by GSK3B. Phosphorylation inhibits microtubule-binding and this plays a critical role in bulge stem cell migration and skin wound repair. Wnt-signaling can repress phosphorylation. Enriched in the hair follicle stem cells (at protein level). Isoform 1 and isoform 2 are ubiquitous expressed, with higher levels seen in lung, heart, thymus, spleen and brain.

The protein resides in the cytoplasm. It is found in the cytoskeleton. Its subcellular location is the golgi apparatus. It localises to the cell membrane. The protein localises to the cell projection. The protein resides in the ruffle membrane. Its function is as follows. F-actin-binding protein which plays a role in cross-linking actin to other cytoskeletal proteins and also binds to microtubules. Plays an important role in ERBB2-dependent stabilization of microtubules at the cell cortex. Acts as a positive regulator of Wnt receptor signaling pathway and is involved in the translocation of AXIN1 and its associated complex (composed of APC, CTNNB1 and GSK3B) from the cytoplasm to the cell membrane. Has actin-regulated ATPase activity and is essential for controlling focal adhesions (FAs) assembly and dynamics. Interaction with CAMSAP3 at the minus ends of non-centrosomal microtubules tethers microtubules minus-ends to actin filaments, regulating focal adhesion size and cell migration. May play role in delivery of transport vesicles containing GPI-linked proteins from the trans-Golgi network through its interaction with GOLGA4. Plays a key role in wound healing and epidermal cell migration. Required for efficient upward migration of bulge cells in response to wounding and this function is primarily rooted in its ability to coordinate microtubule dynamics and polarize hair follicle stem cells. As a regulator of actin and microtubule arrangement and stabilization, it plays an essential role in neurite outgrowth, branching and spine formation during brain development. The chain is Microtubule-actin cross-linking factor 1, isoforms 1/2/3/4 from Mus musculus (Mouse).